Reading from the N-terminus, the 142-residue chain is Nucleoside diphosphate kinase (142 aa).

Residues K11, F59, R87, T93, R104, and N114 each coordinate ATP. The active-site Pros-phosphohistidine intermediate is the H117.

This sequence belongs to the NDK family. In terms of assembly, homotetramer. Requires Mg(2+) as cofactor.

It localises to the cytoplasm. It catalyses the reaction a 2'-deoxyribonucleoside 5'-diphosphate + ATP = a 2'-deoxyribonucleoside 5'-triphosphate + ADP. The enzyme catalyses a ribonucleoside 5'-diphosphate + ATP = a ribonucleoside 5'-triphosphate + ADP. Its function is as follows. Major role in the synthesis of nucleoside triphosphates other than ATP. The ATP gamma phosphate is transferred to the NDP beta phosphate via a ping-pong mechanism, using a phosphorylated active-site intermediate. This is Nucleoside diphosphate kinase from Yersinia pseudotuberculosis serotype I (strain IP32953).